The sequence spans 1060 residues: MNRSRAIVQRGRVLPPPAPLDTTNLAGRRTLQGRAKMASVPVYCLCRLPYDVTRFMIECDMCQDWFHGSCVGVEEEKAADIDLYHCPNCEVLHGPSIMKKRRGSSKGHDTHKGKPVKTGSPTFVRELRSRTFDSSDEVILKPTGNQLTVEFLEENSFSVPILVLKKDGLGMTLPSPSFTVRDVEHYVGSDKEIDVIDVTRQADCKMKLGDFVKYYYSGKREKVLNVISLEFSDTRLSNLVETPKIVRKLSWVENLWPEECVFERPNVQKYCLMSVRDSYTDFHIDFGGTSVWYHVLKGEKIFYLIRPTNANLTLFECWSSSSNQNEMFFGDQVDKCYKCSVKQGQTLFIPTGWIHAVLTPVDCLAFGGNFLHSLNIEMQLKAYEIEKRLSTADLFRFPNFETICWYVGKHILDIFRGLRENRRHPASYLVHGGKALNLAFRAWTRKEALPDHEDEIPETVRTVQLIKDLAREIRLVEDIFQQNVGKTSNIFGLQRIFPAGSIPLTRPAHSTSVSMSRLSLPSKNGSKKKGLKPKELFKKAERKGKESSALGPAGQLSYNLMDTYSHQALKTGSFQKAKFNITGACLNDSDDDSPDLDLDGNESPLALLMSNGSTKRVKSLSKSRRTKIAKKVDKARLMAEQVMEDEFDLDSDDELQIDERLGKEKATLIIRPKFPRKLPRAKPCSDPNRVREPGEVEFDIEEDYTTDEDMVEGVEGKLGNGSGAGGILDLLKASRQVGGPDYAALTEAPASPSTQEAIQGMLCMANLQSSSSSPATSSLQAWWTGGQDRSSGSSSSGLGTVSNSPASQRTPGKRPIKRPAYWRTESEEEEENASLDEQDSLGACFKDAEYIYPSLESDDDDPALKSRPKKKKNSDDAPWSPKARVTPTLPKQDRPVREGTRVASIETGLAAAAAKLAQQELQKAQKKKYIKKKPLLKEVEQPRPQDSNLSLTVPAPTVAATPQLVTSSSPLPPPEPKQEALSGSLADHEYTARPNAFGMAQANRSTTPMAPGVFLTQRRPSVGSQSNQAGQGKRPKKGLATAKQRLGRILKIHRNGKLLL.

The PHD-type zinc-finger motif lies at 41–92; that stretch reads PVYCLCRLPYDVTRFMIECDMCQDWFHGSCVGVEEEKAADIDLYHCPNCEVL. At serine 69 the chain carries Phosphoserine; by CDK1. The disordered stretch occupies residues 100–120; sequence KRRGSSKGHDTHKGKPVKTGS. Residues 101–115 are linker; that stretch reads RRGSSKGHDTHKGKP. At serine 120 the chain carries Phosphoserine; by CDK1. A JmjC domain is found at 231–387; the sequence is FSDTRLSNLV…MQLKAYEIEK (157 aa). Substrate is bound at residue threonine 280. Fe cation-binding residues include histidine 283 and aspartate 285. Substrate is bound at residue lysine 300. Histidine 355 lines the Fe cation pocket. A compositionally biased stretch (polar residues) spans 508–517; sequence AHSTSVSMSR. The interval 508 to 534 is disordered; it reads AHSTSVSMSRLSLPSKNGSKKKGLKPK. Serine 651 carries the post-translational modification Phosphoserine. Tyrosine 704 is modified (phosphotyrosine). Threonine 705 and threonine 706 each carry phosphothreonine. Serine 722 carries the post-translational modification Phosphoserine. Disordered stretches follow at residues 768–840, 852–902, and 915–1046; these read QSSS…EQDS, YPSL…GTRV, and KLAQ…KQRL. Low complexity-rich tracts occupy residues 769 to 778 and 785 to 804; these read SSSSSPATSS and GGQD…VSNS. Residues serine 804, serine 826, serine 834, serine 854, serine 857, and serine 880 each carry the phosphoserine modification. Residues 826–839 are compositionally biased toward acidic residues; the sequence is SEEEEENASLDEQD. Residues 891-900 are compositionally biased toward basic and acidic residues; sequence KQDRPVREGT. The span at 924 to 934 shows a compositional bias: basic residues; sequence AQKKKYIKKKP. Positions 1018-1030 are enriched in polar residues; the sequence is RRPSVGSQSNQAG.

The protein belongs to the JHDM1 histone demethylase family. JHDM1D subfamily. In terms of assembly, interacts with POLR1B, UBTF, SETD1A, HCFC1, E2F1 and ZNF711. Interacts with ZNF263; recruited to the SIX3 promoter along with other proteins involved in chromatin modification and transcriptional corepression where it contributes to transcriptional repression. Fe(2+) serves as cofactor. In terms of processing, phosphorylation at Ser-69 and Ser-120 are required for dissociation from chromatin and accumulation of H4K20Me1 levels during prophase.

Its subcellular location is the nucleus. It is found in the nucleolus. It carries out the reaction N(6),N(6)-dimethyl-L-lysyl(36)-[histone H3] + 2 2-oxoglutarate + 2 O2 = L-lysyl(36)-[histone H3] + 2 formaldehyde + 2 succinate + 2 CO2. It catalyses the reaction N(6),N(6)-dimethyl-L-lysyl(9)-[histone H3] + 2 2-oxoglutarate + 2 O2 = L-lysyl(9)-[histone H3] + 2 formaldehyde + 2 succinate + 2 CO2. In terms of biological role, histone lysine demethylase with selectivity for the di- and monomethyl states that plays a key role cell cycle progression, rDNA transcription and brain development. Demethylates mono- and dimethylated histone H3 'Lys-9' residue (H3K9Me1 and H3K9Me2), dimethylated H3 'Lys-27' (H3K27Me2) and monomethylated histone H4 'Lys-20' residue (H4K20Me1). Acts as a transcription activator as H3K9Me1, H3K9Me2, H3K27Me2 and H4K20Me1 are epigenetic repressive marks. Involved in cell cycle progression by being required to control G1-S transition. Acts as a coactivator of rDNA transcription, by activating polymerase I (pol I) mediated transcription of rRNA genes. Required for brain development, probably by regulating expression of neuron-specific genes. Only has activity toward H4K20Me1 when nucleosome is used as a substrate and when not histone octamer is used as substrate. May also have weak activity toward dimethylated H3 'Lys-36' (H3K36Me2), however, the relevance of this result remains unsure in vivo. Specifically binds trimethylated 'Lys-4' of histone H3 (H3K4me3), affecting histone demethylase specificity: has weak activity toward H3K9Me2 in absence of H3K4me3, while it has high activity toward H3K9me2 when binding H3K4me3. Positively modulates transcription of histone demethylase KDM5C, acting synergistically with transcription factor ARX; synergy may be related to enrichment of histone H3K4me3 in regulatory elements. The polypeptide is Histone lysine demethylase PHF8 (PHF8) (Homo sapiens (Human)).